The chain runs to 314 residues: Probable RuBisCO transcriptional regulator (314 aa).

The region spanning F6–T63 is the HTH lysR-type domain. The segment at residues F23–Q42 is a DNA-binding region (H-T-H motif).

The protein belongs to the LysR transcriptional regulatory family.

The protein localises to the plastid. It is found in the chloroplast. Functionally, trans-acting transcriptional regulator of RuBisCO genes (rbcL and rbcS) expression. The sequence is that of Probable RuBisCO transcriptional regulator (rbcR) from Emiliania huxleyi (Coccolithophore).